Reading from the N-terminus, the 337-residue chain is tRNA(Ile)-lysidine synthase (337 aa).

40-45 (SGGQDS) contributes to the ATP binding site.

The protein belongs to the tRNA(Ile)-lysidine synthase family.

It localises to the cytoplasm. It catalyses the reaction cytidine(34) in tRNA(Ile2) + L-lysine + ATP = lysidine(34) in tRNA(Ile2) + AMP + diphosphate + H(+). Functionally, ligates lysine onto the cytidine present at position 34 of the AUA codon-specific tRNA(Ile) that contains the anticodon CAU, in an ATP-dependent manner. Cytidine is converted to lysidine, thus changing the amino acid specificity of the tRNA from methionine to isoleucine. The polypeptide is tRNA(Ile)-lysidine synthase (Parasynechococcus marenigrum (strain WH8102)).